A 1557-amino-acid polypeptide reads, in one-letter code: Probable kinase PglW (1557 aa).

The NERD domain maps to 12–130 (SEFEHERRGL…VAEAVCFTDN (119 aa)). 2 consecutive Protein kinase domains span residues 195 to 490 (ELER…LEVV) and 530 to 816 (WEVR…KVFL). ATP contacts are provided by residues 536–544 (LGTGSTSRA) and lysine 564. 2 disordered regions span residues 615–634 (DERD…RRRE) and 821–861 (TVPS…QRDR). Over residues 830–849 (PAAPADGAAPAEGAAAGIAD) the composition is skewed to low complexity.

The protein belongs to the protein kinase superfamily. Ser/Thr protein kinase family.

Its function is as follows. BREX systems (bacteriophage exclusion) provide immunity against bacteriophage. Part of a type 2 BREX system. Previously called the phage growth limitation (Pgl) system, it confers protection against bacteriophage phiC31. The bacteria allows one cycle of phage infection, but subsequent cycles are impaired, protecting the original bacterial colony. The system undergoes high rates (10(-3) to 10(-4)) of phase reversion, i.e. loss and regain of phiC31 resistance. When the pglW-pglX-pglY-pglZ genes are transformed into a susceptible S.lividans (strain 1326) they confer resistance to infection by phage phiC31 and phiBT1; all 4 genes are necessary. The proteins has kinase domains and might bind DNA. Autophosphorylates when synthesized in vitro, cannot be expressed in E.coli. The polypeptide is Probable kinase PglW (Streptomyces coelicolor (strain ATCC BAA-471 / A3(2) / M145)).